We begin with the raw amino-acid sequence, 872 residues long: uncharacterized protein (872 aa).

Positions Leu496–Val524 form a coiled coil. 2 disordered regions span residues Arg595–Gln736 and Thr844–Val872. 2 stretches are compositionally biased toward polar residues: residues Gln615–Phe659 and Pro670–Val686. Positions Gln687–Gln736 are enriched in low complexity.

The protein resides in the virion. This is an uncharacterized protein from Acanthamoeba polyphaga mimivirus (APMV).